Reading from the N-terminus, the 82-residue chain is ATP synthase subunit c (82 aa).

The next 2 helical transmembrane spans lie at Pro3–Gly23 and Leu57–Ala77.

The protein belongs to the ATPase C chain family. As to quaternary structure, F-type ATPases have 2 components, F(1) - the catalytic core - and F(0) - the membrane proton channel. F(1) has five subunits: alpha(3), beta(3), gamma(1), delta(1), epsilon(1). F(0) has four main subunits: a(1), b(1), b'(1) and c(10-14). The alpha and beta chains form an alternating ring which encloses part of the gamma chain. F(1) is attached to F(0) by a central stalk formed by the gamma and epsilon chains, while a peripheral stalk is formed by the delta, b and b' chains.

It is found in the cellular thylakoid membrane. In terms of biological role, f(1)F(0) ATP synthase produces ATP from ADP in the presence of a proton or sodium gradient. F-type ATPases consist of two structural domains, F(1) containing the extramembraneous catalytic core and F(0) containing the membrane proton channel, linked together by a central stalk and a peripheral stalk. During catalysis, ATP synthesis in the catalytic domain of F(1) is coupled via a rotary mechanism of the central stalk subunits to proton translocation. Key component of the F(0) channel; it plays a direct role in translocation across the membrane. A homomeric c-ring of between 10-14 subunits forms the central stalk rotor element with the F(1) delta and epsilon subunits. This Synechococcus sp. (strain PCC 6716) protein is ATP synthase subunit c.